The following is a 174-amino-acid chain: UPF0316 protein lin1888 (174 aa).

Helical transmembrane passes span 4-24 (GIFI…IYTV), 36-56 (LAAL…SLVL), and 62-82 (IANV…GMKI).

This sequence belongs to the UPF0316 family.

Its subcellular location is the cell membrane. This chain is UPF0316 protein lin1888, found in Listeria innocua serovar 6a (strain ATCC BAA-680 / CLIP 11262).